The sequence spans 541 residues: Sorting nexin-27 (541 aa).

The interval 1–42 (MADEDGEGIHPSAPHRNGGGGGGGGSGLHCAGNGGGGGGGPR) is disordered. The span at 17-41 (NGGGGGGGGSGLHCAGNGGGGGGGP) shows a compositional bias: gly residues. A PDZ domain is found at 43-136 (VVRIVKSESG…ELILTVLSVP (94 aa)). A phosphoserine mark is found at S51 and S62. Residues 161–269 (QAVPISVPRY…EFLSESDENY (109 aa)) enclose the PX domain. Residues 273–362 (SDVELRVALP…TCLTIRKWLF (90 aa)) form the Ras-associating domain. The interval 273 to 362 (SDVELRVALP…TCLTIRKWLF (90 aa)) is FERM-like region F1. The tract at residues 373-421 (NDLAVTYFFHQAVDDVKKGYIKAEEKSYQLQKLYEQRKMVMYLNMLRTC) is FERM-like region F2. The segment at 425–525 (NEIIFPHCAC…RVFCELKWRK (101 aa)) is FERM-like region F3.

It belongs to the sorting nexin family. As to quaternary structure, core component of the SNX27-retromer, a multiprotein complex composed of SNX27, the WASH complex and the retromer complex. Interacts (via PDZ domain) with a number of target transmembrane proteins (via PDZ-binding motif): ABCC4, ADRB2, ARHGEF7, GRIA1, GRIA2, GRIN1, GRIN2A GRIN2C, KCNJ6, KCNJ9 and SLC2A1/GLUT1. Interacts (via the FERM-like regions) with the WASH complex. Interacts with SNX1. Interacts with CYTIP. Isoform 1 and isoform 2 directly interact with DGKZ. Isoform 1 and isoform 2 interact with HT4R isoform 5-HTA(A). Interacts with MCC. Interacts (via PDZ domains) with SLC9A3; directs SLC9A3 membrane insertion from early endosomes to the plasma membrane. As to expression, widely expressed. Expressed in cells of hematopoietic origin (at protein level).

It localises to the early endosome membrane. Its subcellular location is the cytoplasm. It is found in the cytosol. Involved in the retrograde transport from endosome to plasma membrane, a trafficking pathway that promotes the recycling of internalized transmembrane proteins. Following internalization, endocytosed transmembrane proteins are delivered to early endosomes and recycled to the plasma membrane instead of being degraded in lysosomes. SNX27 specifically binds and directs sorting of a subset of transmembrane proteins containing a PDZ-binding motif at the C-terminus: following interaction with target transmembrane proteins, associates with the retromer complex, preventing entry into the lysosomal pathway, and promotes retromer-tubule based plasma membrane recycling. SNX27 also binds with the WASH complex. Interacts with membranes containing phosphatidylinositol-3-phosphate (PtdIns(3P)). May participate in establishment of natural killer cell polarity. Recruits CYTIP to early endosomes. The chain is Sorting nexin-27 (SNX27) from Homo sapiens (Human).